A 430-amino-acid polypeptide reads, in one-letter code: Cyclin-A2 (430 aa).

Position 1 is an N-acetylmethionine (methionine 1). Disordered regions lie at residues 1–80 and 106–129; these read MLGS…PIND and EEIQ…FNSA. Serine 5 bears the Phosphoserine mark. A compositionally biased stretch (basic and acidic residues) spans 107–120; the sequence is EIQKRPTESKKSES.

The protein belongs to the cyclin family. Cyclin AB subfamily. Interacts with the CDK1 and CDK2 protein kinases to form serine/threonine kinase holoenzyme complexes. Interacts with CDK1 (hyperphosphorylated form in G1 and underphosphorylated forms in S and G2). Interacts with CDK2; the interaction increases from G1 to G2. Interacts (associated with CDK2 but not with CDK1) with SCAPER; regulates the activity of CCNA2/CDK2 by transiently maintaining CCNA2 in the cytoplasm. Forms a ternary complex with CDK2 and CDKN1B; CDKN1B inhibits the kinase activity of CDK2 through conformational rearrangements. Interacts with INCA1. In terms of processing, polyubiquitinated via 'Lys-11'-linked ubiquitin by the anaphase-promoting complex (APC/C), leading to its degradation by the proteasome. Deubiquitinated and stabilized by USP37 enables entry into S phase. Ubiquitinated during the G1 phase by the SCF(FBXO31) complex, leading to its proteasomal degradation.

The protein localises to the nucleus. It is found in the cytoplasm. In terms of biological role, cyclin which controls both the G1/S and the G2/M transition phases of the cell cycle. Functions through the formation of specific serine/threonine kinase holoenzyme complexes with the cyclin-dependent protein kinases CDK1 and CDK2. The cyclin subunit confers the substrate specificity of these complexes and differentially interacts with and activates CDK1 and CDK2 throughout the cell cycle. This Bos taurus (Bovine) protein is Cyclin-A2.